A 376-amino-acid chain; its full sequence is 5-hydroxytryptamine receptor 1D (376 aa).

The disordered stretch occupies residues 1-22 (MSPPNQSEEGLPQEASNRSLNA). Residues asparagine 5, asparagine 17, and asparagine 21 are each glycosylated (N-linked (GlcNAc...) asparagine). Helical transmembrane passes span 39-64 (VSLV…TTIL), 76-97 (LIGS…ISIA), and 110-134 (LCDI…VIAL). Cysteines 111 and 188 form a disulfide. Serotonin is bound by residues aspartate 118 and cysteine 122. The DRY motif; important for ligand-induced conformation changes motif lies at 135–137 (DRY). The next 4 helical transmembrane spans lie at 155–176 (AGAM…PLFW), 195–218 (ISYT…ILYS), 300–325 (KTLG…VLPI), and 335–358 (ALFD…YTVF). Serotonin is bound at residue serine 320. The NPxxY motif; important for ligand-induced conformation changes and signaling signature appears at 351–355 (NPIIY).

It belongs to the G-protein coupled receptor 1 family. Homodimer. Heterodimer with HTR1B.

It localises to the cell membrane. In terms of biological role, G-protein coupled receptor for 5-hydroxytryptamine (serotonin). Also functions as a receptor for ergot alkaloid derivatives, various anxiolytic and antidepressant drugs and other psychoactive substances. Ligand binding causes a conformation change that triggers signaling via guanine nucleotide-binding proteins (G proteins) and modulates the activity of downstream effectors, such as adenylate cyclase. HTR1D is coupled to G(i)/G(o) G alpha proteins and mediates inhibitory neurotransmission by inhibiting adenylate cyclase activity. Regulates the release of 5-hydroxytryptamine in the brain, and thereby affects neural activity. May also play a role in regulating the release of other neurotransmitters. May play a role in vasoconstriction. The polypeptide is 5-hydroxytryptamine receptor 1D (HTR1D) (Cavia porcellus (Guinea pig)).